Reading from the N-terminus, the 1202-residue chain is DNA-directed RNA polymerase subunit beta (1202 aa).

The segment at 1154 to 1202 (NMDEDDDEVVNVDALAKYAEEHKADDKKNEEENKSEATSTTTDDKTNQN) is disordered. Residues 1171-1188 (YAEEHKADDKKNEEENKS) show a composition bias toward basic and acidic residues.

The protein belongs to the RNA polymerase beta chain family. In terms of assembly, the RNAP catalytic core consists of 2 alpha, 1 beta, 1 beta' and 1 omega subunit. When a sigma factor is associated with the core the holoenzyme is formed, which can initiate transcription.

The enzyme catalyses RNA(n) + a ribonucleoside 5'-triphosphate = RNA(n+1) + diphosphate. Its function is as follows. DNA-dependent RNA polymerase catalyzes the transcription of DNA into RNA using the four ribonucleoside triphosphates as substrates. This chain is DNA-directed RNA polymerase subunit beta, found in Limosilactobacillus reuteri (strain DSM 20016) (Lactobacillus reuteri).